Consider the following 346-residue polypeptide: UDP-N-acetylenolpyruvoylglucosamine reductase (346 aa).

The region spanning 18–189 is the FAD-binding PCMH-type domain; the sequence is LRAQARAFIA…VSVVFALKTH (172 aa). Residue Arg165 is part of the active site. The Proton donor role is filled by Ser240. Glu336 is a catalytic residue.

It belongs to the MurB family. It depends on FAD as a cofactor.

It localises to the cytoplasm. It catalyses the reaction UDP-N-acetyl-alpha-D-muramate + NADP(+) = UDP-N-acetyl-3-O-(1-carboxyvinyl)-alpha-D-glucosamine + NADPH + H(+). It participates in cell wall biogenesis; peptidoglycan biosynthesis. In terms of biological role, cell wall formation. This is UDP-N-acetylenolpyruvoylglucosamine reductase from Neisseria meningitidis serogroup C (strain 053442).